We begin with the raw amino-acid sequence, 328 residues long: Trans-O-hydroxybenzylidenepyruvate hydratase-aldolase (328 aa).

Belongs to the DapA family. Homotrimer.

It catalyses the reaction (3E)-4-(2-hydroxyphenyl)-2-oxobut-3-enoate + H2O = salicylaldehyde + pyruvate. Its pathway is aromatic compound metabolism; naphthalene degradation. Inhibited bye p-chloromercuribenzoate and salicylaldehyde. Activated by salicylate. Functionally, involved in the naphthalene and naphthalenesulfonate catabolic pathway. Catalyzes the transformation of trans-O-hydroxybenzylidenepyruvate (THBPA) to salicylaldehyde and pyruvate. The reaction is reversible. Can also use 2,4-dihydroxybenzalpyruvate (2,4-DHBP) and 2,6-dihydroxybenzalpyruvate (2,6-DHBP). The protein is Trans-O-hydroxybenzylidenepyruvate hydratase-aldolase (nsaE) of Sphingobium xenophagum.